Consider the following 510-residue polypeptide: MIWHVQNENFILDSTRIFMKAFHLLLFQGSFIFPECILIFGLILLLMIDLTSDQKDRPWFYFISSTSLVISITALLFRWREEPIISFSGNFQTNNFNEIFQFLILLCSTLCIPLSVEYIECTEMAITEFLLFVLTATLGGMFLCGANDLITIFVALECFSLCSYLLSGYTKRDLRSNEATMKYLLMGGASSSILVYGFSWLYGLSGGEIELQEIVNGLINTQMYNSPGISIALIFITVGLGFKLSLAPFHQWTPDVYEGSPTPVVAFLSVTSKVAALALATRILDIPFYFSSNEWHLLLEILAILSMILGNLLAITQTSMKRMLAYSSIGQIGYVIIGIIVGDSNDGYASMITYMLFYISMNLGTFACIVLFGLRTGTDNIRDYAGLYTKDPFLALSLALCLLSLGGLPPLAGFFGKLYLFWCGWQAGLYFLVSIGLLTSVLSIYYYLKIVKLLMTGRNQEITPYVRNYRRSPLRSNNSIELSMTVCVIASTILGISMNPILAIAQDTLF.

Helical transmembrane passes span 31 to 51 (FIFP…IDLT), 59 to 79 (WFYF…LFRW), 99 to 119 (IFQF…VEYI), 124 to 144 (MAIT…MFLC), 149 to 169 (LITI…LSGY), 184 to 204 (LLMG…LYGL), 229 to 249 (ISIA…LAPF), 261 to 281 (PTPV…ALAT), 295 to 315 (WHLL…LLAI), 323 to 343 (MLAY…IVGD), 354 to 374 (YMLF…LFGL), 395 to 415 (ALSL…AGFF), 418 to 438 (LYLF…IGLL), and 484 to 504 (MTVC…ILAI).

The protein belongs to the complex I subunit 2 family. As to quaternary structure, NDH is composed of at least 16 different subunits, 5 of which are encoded in the nucleus.

The protein resides in the plastid. It is found in the chloroplast thylakoid membrane. It carries out the reaction a plastoquinone + NADH + (n+1) H(+)(in) = a plastoquinol + NAD(+) + n H(+)(out). The enzyme catalyses a plastoquinone + NADPH + (n+1) H(+)(in) = a plastoquinol + NADP(+) + n H(+)(out). Functionally, NDH shuttles electrons from NAD(P)H:plastoquinone, via FMN and iron-sulfur (Fe-S) centers, to quinones in the photosynthetic chain and possibly in a chloroplast respiratory chain. The immediate electron acceptor for the enzyme in this species is believed to be plastoquinone. Couples the redox reaction to proton translocation, and thus conserves the redox energy in a proton gradient. This chain is NAD(P)H-quinone oxidoreductase subunit 2 A, chloroplastic, found in Oryza sativa subsp. japonica (Rice).